Here is a 313-residue protein sequence, read N- to C-terminus: Sorting nexin-20 (313 aa).

A disordered region spans residues 1 to 61 (MASPQHPGGP…MTTRELQEHW (61 aa)). Ser3 bears the Phosphoserine mark. Over residues 29–38 (PPGPDLPCPG) the composition is skewed to pro residues. Over residues 45 to 55 (GPTSNSNMTTR) the composition is skewed to polar residues. Residues 71–188 (VRLLFEIASA…DFLTRPELCE (118 aa)) enclose the PX domain. A 1,2-diacyl-sn-glycero-3-phospho-(1D-myo-inositol-3-phosphate) contacts are provided by Arg113, Ser115, Lys140, and Arg154.

It belongs to the sorting nexin family. As to quaternary structure, interacts with SELPLG. Interaction with SELPLG is controversial.

Its subcellular location is the early endosome membrane. The protein localises to the cell membrane. It localises to the cytoplasm. It is found in the nucleus. In terms of biological role, may play a role in cellular vesicle trafficking. Has been proposed to function as a sorting protein that targets SELPLG into endosomes, but has no effect on SELPLG internalization from the cell surface, or on SELPLG-mediated cell-cell adhesion. In Rattus norvegicus (Rat), this protein is Sorting nexin-20 (Snx20).